The primary structure comprises 121 residues: Basic phospholipase A2 homolog 2 (121 aa).

Intrachain disulfides connect C26–C115, C28–C44, C43–C95, C49–C121, C50–C88, C57–C81, and C75–C86. The important for membrane-damaging activities in eukaryotes and bacteria; heparin-binding stretch occupies residues 105-117 (KKYRYHLKPLCKK).

This sequence belongs to the phospholipase A2 family. Group II subfamily. K49 sub-subfamily. As to quaternary structure, homodimer; non-covalently linked (probable alternative/compact dimer conformation in solution). In terms of tissue distribution, expressed by the venom gland.

It localises to the secreted. In terms of biological role, snake venom phospholipase A2 homolog that lacks enzymatic activity. Is myotoxic and displays edema-inducing activities in mouse paw. Also displays cytotoxic activity against myotubes. A model of myotoxic mechanism has been proposed: an apo Lys49-PLA2 is activated by the entrance of a hydrophobic molecule (e.g. fatty acid) at the hydrophobic channel of the protein leading to a reorientation of a monomer. This reorientation causes a transition between 'inactive' to 'active' states, causing alignment of C-terminal and membrane-docking sites (MDoS) side-by-side and putting the membrane-disruption sites (MDiS) in the same plane, exposed to solvent and in a symmetric position for both monomers. The MDoS region stabilizes the toxin on membrane by the interaction of charged residues with phospholipid head groups. Subsequently, the MDiS region destabilizes the membrane with penetration of hydrophobic residues. This insertion causes a disorganization of the membrane, allowing an uncontrolled influx of ions (i.e. calcium and sodium), and eventually triggering irreversible intracellular alterations and cell death. The sequence is that of Basic phospholipase A2 homolog 2 from Bothrops brazili (Brazil's lancehead).